The chain runs to 232 residues: tRNA-uridine aminocarboxypropyltransferase (232 aa).

4 residues coordinate Zn(2+): Cys-31, Cys-34, Cys-41, and Cys-43. The DXTW motif lies at 137 to 140 (DGTW).

It belongs to the TDD superfamily. DTWD2 family. TapT subfamily. In terms of assembly, monomer in solution.

The catalysed reaction is a uridine in tRNA + S-adenosyl-L-methionine = a 3-[(3S)-3-amino-3-carboxypropyl]uridine in tRNA + S-methyl-5'-thioadenosine + H(+). It carries out the reaction uridine(47) in tRNA(Phe) + S-adenosyl-L-methionine = 3-[(3S)-3-amino-3-carboxypropyl]uridine(47) in tRNA(Phe) + S-methyl-5'-thioadenosine + H(+). The degree of the acp3U modification at U47 is dependent on the presence of the m7G modification at the preceding nucleotide G46. It also depends on medium conditions. Catalyzes the formation of 3-(3-amino-3-carboxypropyl)uridine (acp3U) at position 47 of tRNAs. Acp3U47 confers thermal stability on tRNA. The sequence is that of tRNA-uridine aminocarboxypropyltransferase from Escherichia coli (strain K12).